Here is a 331-residue protein sequence, read N- to C-terminus: FMRFamide-related neuropeptides (331 aa).

The N-terminal stretch at 1-25 (MRCWSPCSLLVVIVIYCLSSHTSEA) is a signal peptide. Residues 26–65 (FDLAQACVESQRLSLLPICDTIFAVQQEGVQQSADDGMRS) constitute a propeptide that is removed on maturation. Phenylalanine 71 and phenylalanine 83 each carry phenylalanine amide. A propeptide spanning residues 86–94 (NVPDLPFED) is cleaved from the precursor. Phenylalanine 100 bears the Phenylalanine amide mark. A propeptide spanning residues 103-168 (AAPQLDELLK…YIDDVEDSDV (66 aa)) is cleaved from the precursor. Residues 122-158 (QKADETSVRRKRSTDAAPQNNAENPEQKNDSAKITKR) form a disordered region. Residues 146 to 158 (PEQKNDSAKITKR) show a composition bias toward basic and acidic residues. Phenylalanine amide is present on residues phenylalanine 174 and phenylalanine 181. A propeptide spanning residues 184–194 (NPSDVGNKLTE) is cleaved from the precursor. Phenylalanine 200 is modified (phenylalanine amide). A propeptide spanning residues 203–205 (DPE) is cleaved from the precursor. The residue at position 211 (phenylalanine 211) is a Phenylalanine amide. A propeptide spanning residues 214–216 (SDD) is cleaved from the precursor. Phenylalanine 222 is modified (phenylalanine amide). Residues 225–236 (NPSDAEDELEED) constitute a propeptide that is removed on maturation. Phenylalanine 242 is modified (phenylalanine amide). Residues 245–254 (GGEDDEEEAE) constitute a propeptide that is removed on maturation. Phenylalanine 260 is subject to Phenylalanine amide. The propeptide occupies 263–265 (DPE). Residue phenylalanine 271 is modified to Phenylalanine amide. A propeptide spanning residues 274–277 (SGED) is cleaved from the precursor. Over residues 279–296 (RFMRFGRNPDEQEADKRF) the composition is skewed to basic and acidic residues. The segment at 279-310 (RFMRFGRNPDEQEADKRFMRFGRGGEDDEVST) is disordered. At phenylalanine 283 the chain carries Phenylalanine amide. Residues 286-293 (NPDEQEAD) constitute a propeptide that is removed on maturation. Position 299 is a phenylalanine amide (phenylalanine 299). A propeptide spanning residues 302 to 312 (GGEDDEVSTED) is cleaved from the precursor. Phenylalanine 318 is modified (phenylalanine amide). The propeptide occupies 321–331 (SADKCKGCLEG).

Belongs to the FARP (FMRFamide related peptide) family.

The protein resides in the secreted. Its function is as follows. Excitatory neurotransmitters that directly modulate chromatophore function by activating chromatophore expansion at the chromatophore neuromuscular junction. This is FMRFamide-related neuropeptides from Doryteuthis opalescens (California market squid).